Here is a 332-residue protein sequence, read N- to C-terminus: tRNA U34 carboxymethyltransferase (332 aa).

Carboxy-S-adenosyl-L-methionine-binding positions include K91, W105, K110, G130, 152-154, 181-182, M196, Y200, and R315; these read DPS and IE.

It belongs to the class I-like SAM-binding methyltransferase superfamily. CmoB family. In terms of assembly, homotetramer.

The enzyme catalyses carboxy-S-adenosyl-L-methionine + 5-hydroxyuridine(34) in tRNA = 5-carboxymethoxyuridine(34) in tRNA + S-adenosyl-L-homocysteine + H(+). In terms of biological role, catalyzes carboxymethyl transfer from carboxy-S-adenosyl-L-methionine (Cx-SAM) to 5-hydroxyuridine (ho5U) to form 5-carboxymethoxyuridine (cmo5U) at position 34 in tRNAs. This Shewanella putrefaciens (strain CN-32 / ATCC BAA-453) protein is tRNA U34 carboxymethyltransferase.